The chain runs to 59 residues: Putative conotoxin (59 aa).

Residues 1 to 25 (MGMRMMFTVFLLVVLATTVVPITLA) form the signal peptide. Positions 26 to 47 (SATDGRNAAANARVSPVISKSS) are excised as a propeptide.

Belongs to the conotoxin A superfamily. As to expression, expressed by the venom duct.

The protein localises to the secreted. In terms of biological role, acts as a neurotoxin. This chain is Putative conotoxin, found in Conus imperialis (Imperial cone).